The chain runs to 1644 residues: Terminal uridylyltransferase 4 (1644 aa).

Disordered regions lie at residues 30 to 60 (SNQTLKPRNDKSEIGTSSLNRNSSKKTKQND) and 75 to 277 (AASV…EMDY). S102 is modified (phosphoserine). Residues 108-123 (KGSSQTKLEKTPSLQT) are compositionally biased toward polar residues. S131 bears the Phosphoserine mark. Polar residues-rich tracts occupy residues 146-156 (AEATTEKALNS) and 163-174 (TPTSQMKLQKTP). The residue at position 176 (S176) is a Phosphoserine. Composition is skewed to polar residues over residues 194–209 (QTESQQTGKKLTSSFV) and 226–242 (LENSSLSQKQQTQTDNI). Residues 258-272 (DLSKMKSEESNKENS) show a composition bias toward basic and acidic residues. The segment at 273–353 (SEMDYLENAT…KEKRHKKNIL (81 aa)) is required for interaction with LIN28A and pre-let-7 RNA. C326, C329, H342, and H348 together coordinate Zn(2+). The segment covering 603 to 623 (IADENKAKADEPKDDTKKTET) has biased composition (basic and acidic residues). The segment at 603 to 640 (IADENKAKADEPKDDTKKTETDNQSNAAKAKHGKSPLT) is disordered. The PAP-associated 1 domain maps to 649–698 (LGQLWLELLKFYTLDFALEEYVICVRIQDILTRENKNWPKRRIAIEDPFS). Disordered stretches follow at residues 733-759 (KGGNKSTMDPKKKEKGKLSSKKPVKSD) and 812-841 (HGQDSSSLSTASGGSDLKQKSAEKQGDLTP). The span at 745 to 755 (KEKGKLSSKKP) shows a compositional bias: basic residues. Residues 815 to 827 (DSSSLSTASGGSD) show a composition bias toward low complexity. Over residues 828-837 (LKQKSAEKQG) the composition is skewed to basic and acidic residues. The segment at 918-1634 (DKFILTSGKP…CATRRCRERC (717 aa)) is sufficient for monouridylation activity. Residues 930–947 (IVCSICKKDGHSKNDCPE) form a CCHC-type 1 zinc finger. Residues 1015-1018 (SSKN), 1025-1028 (SDLD), N1098, K1120, 1138-1142 (SYAYI), and H1254 each bind UTP. Mg(2+) is bound by residues D1026 and D1028. A PAP-associated 2 domain is found at 1201–1254 (SLGELWLGLLRFYTEEFDFKEYVISIRQKKLLTTFEKQWTSKCIAIEDPFDLNH). The CCHC-type 2 zinc finger occupies 1310–1327 (RCCRVCGKIGHYMKDCPK). Positions 1329–1350 (KRLKKKDSEEEKEGNEEEKDSR) are disordered. The segment at 1358–1375 (LRCFICGDAGHVRRECPE) adopts a CCHC-type 3 zinc-finger fold. The segment covering 1402–1427 (AGSAQQQSDQSIRTRQSSECSDSPSY) has biased composition (low complexity). The segment at 1402–1483 (AGSAQQQSDQ…LYNFPQSPPA (82 aa)) is disordered. Over residues 1428–1450 (SPQPQPFPQNSPQPSALPPPPSQ) the composition is skewed to pro residues. The span at 1451-1473 (PGSQPKLGPPQQGGQPPHQVQMP) shows a compositional bias: low complexity. R1624 bears the Omega-N-methylarginine mark.

The protein belongs to the DNA polymerase type-B-like family. Interacts with LIN28A in the presence of pre-let-7 RNA. Interacts with T2BP. Interacts with MOV10; the interaction is RNA-dependent. Mg(2+) serves as cofactor. It depends on Mn(2+) as a cofactor. In terms of tissue distribution, ubiquitously expressed.

The protein localises to the nucleus. The protein resides in the cytoplasm. Its subcellular location is the cytoplasmic ribonucleoprotein granule. The enzyme catalyses RNA(n) + UTP = RNA(n)-3'-uridine ribonucleotide + diphosphate. In terms of biological role, uridylyltransferase that mediates the terminal uridylation of mRNAs with short (less than 25 nucleotides) poly(A) tails, hence facilitating global mRNA decay. Essential for both oocyte maturation and fertility. Through 3' terminal uridylation of mRNA, sculpts, with TUT7, the maternal transcriptome by eliminating transcripts during oocyte growth. Involved in microRNA (miRNA)-induced gene silencing through uridylation of deadenylated miRNA targets. Also functions as an integral regulator of microRNA biogenesiS using 3 different uridylation mechanisms. Acts as a suppressor of miRNA biogenesis by mediating the terminal uridylation of some miRNA precursors, including that of let-7 (pre-let-7), miR107, miR-143 and miR-200c. Uridylated miRNAs are not processed by Dicer and undergo degradation. Degradation of pre-let-7 contributes to the maintenance of embryonic stem (ES) cell pluripotency. Also catalyzes the 3' uridylation of miR-26A, a miRNA that targets IL6 transcript. This abrogates the silencing of IL6 transcript, hence promoting cytokine expression. In the absence of LIN28A, TUT7 and TUT4 monouridylate group II pre-miRNAs, which includes most of pre-let7 members, that shapes an optimal 3' end overhang for efficient processing. Add oligo-U tails to truncated pre-miRNAS with a 5' overhang which may promote rapid degradation of non-functional pre-miRNA species. May also suppress Toll-like receptor-induced NF-kappa-B activation via binding to T2BP. Does not play a role in replication-dependent histone mRNA degradation. Due to functional redundancy between TUT4 and TUT7, the identification of the specific role of each of these proteins is difficult. TUT4 and TUT7 restrict retrotransposition of long interspersed element-1 (LINE-1) in cooperation with MOV10 counteracting the RNA chaperonne activity of L1RE1. TUT7 uridylates LINE-1 mRNAs in the cytoplasm which inhibits initiation of reverse transcription once in the nucleus, whereas uridylation by TUT4 destabilizes mRNAs in cytoplasmic ribonucleoprotein granules. The polypeptide is Terminal uridylyltransferase 4 (Mus musculus (Mouse)).